Here is a 1414-residue protein sequence, read N- to C-terminus: MKALLDLFKQVQQNEQFDAIKIGLASPEKIRSWSYGEVKKPETINYRTFKPERDGLFCAKIFGPIKDYECLCGKYKRLKHRGVICEKCGVEVTLAKVRRERMGHIELASPTAHIWFLKSLPSRLGMVLDMTLRDIERVLYFEAYVVTDPGMTPLKRCQIMSEDDYAAKYEEFGDDFTAFMGAEGIRELLRAIDIDRDAEMLRQELKDSKSEAKIKKYAKRLKVLEAFQRSGIKPDWMIMEVLPVLPPELRPLVPLDGGRFATSDLNDLYRRVINRNNRLKRLMELRAPEIITRNEKRMLQEAVDSLLDNGRRGKAMTGANKRPLKSLAEMIKGKGGRFRQNLLGKRVDYSGRSVIVVGPQLKLHQCGLPKLMALELFKPFIFNKLELMGLATTIKAAKKLVEIQEPVVWDILEDVIREHPVMLNRAPTLHRLGIQAFEPVLIEGKAIQLHPLVCAAFNADFDGDQMAVHVPLSIEAQMEARTLMLASNNILFPSNGEPSIVPSQDIVLGLYYATREAINAKGEGMMFPDVSEVIRAYDNKEVELATRITVRITEYPKNVETGEFEKTVTRYETTVGRAILSEILPKGLPFSVLNRALKKKEISRLINLSFRKCGLRATVVFADQLLQSGFRLATRAGISICVDDMLVPSQKVDIIATAEGEVKQIEQQYSSGLVTAGERYNKVVDIWGKAGDDVGKAMMDQLKVEDVTKRDGTKTTQESFNAIYMMADSGARGSAAQIRQLAGMRGLMAKPDGSIIETPITANFREGLNVLQYFISTHGARKGLADTALKTANSGYLTRRLVDVTQDLVVIEDDCGTSNGASMKALVEGGEVIEALRDRILGRVAANDIVNPETQATLYAAGTLLDEDMVEEIERLGIDEVKVRTPLTCDTRFGLCALCYGRDLGRGSMVNAGEAVGVIAAQSIGEPGTQLTMRTFHIGGAASRAAVASSVEAKSNGTVRFTATMRYVTNGKGGQIVISRSGEVLITDDLGRERERHKVPYGATLIVKDGLVIKAGTALATWDPLTRPIITEYTGTVKFENVEEGSTVARQIDEVTGLSTLVVIDAKRRGSVTKTVRPQVKLLNEQGEEVKIAGTEHAVTIGFQVGALITVKDGQQVTVGEVLARIPTESQKTRDITGGLPRVAELFEARSPKDAGMLAEVTGTVAFGKETKGKQRLEITDMDGNKHEFLITKDKQVLVHDGQVVNKGEMIVDGPADPQDILRLLGIEALARYIVDEVQDVYRLQGVKINDKHIEVIVRQMLRRVQVVDAGDANYIVGEQVERSELLDENDRVIAQGKIPATYENVLLGITKASLSTDSFISAASFQETTRVLTEAAIMGKRDGLRGLKENVIVGRLIPAGTGLAFHRARKEKESWEAEERTALLQSEKAARAAEAEAQFADISSTPDSDTDAS.

Zn(2+) contacts are provided by C70, C72, C85, and C88. The Mg(2+) site is built by D460, D462, and D464. 4 residues coordinate Zn(2+): C815, C889, C896, and C899. Positions 1395-1414 (EAEAQFADISSTPDSDTDAS) are disordered.

It belongs to the RNA polymerase beta' chain family. The RNAP catalytic core consists of 2 alpha, 1 beta, 1 beta' and 1 omega subunit. When a sigma factor is associated with the core the holoenzyme is formed, which can initiate transcription. Mg(2+) is required as a cofactor. Zn(2+) serves as cofactor.

The enzyme catalyses RNA(n) + a ribonucleoside 5'-triphosphate = RNA(n+1) + diphosphate. DNA-dependent RNA polymerase catalyzes the transcription of DNA into RNA using the four ribonucleoside triphosphates as substrates. The protein is DNA-directed RNA polymerase subunit beta' of Herminiimonas arsenicoxydans.